Reading from the N-terminus, the 640-residue chain is MKIKVKLPDGKEKEYDRGITPAEIAKELGVKKAIGAVVNGELWDLKRPIENDCELRLVTLEDPEAPEFYRHTMAHILAQAVMRIYGKENVKLGIGPTIENGFYYDFDIKNGKLTEEDLPKIEQEMKKIIKENLPIERKEISKEEARKLFNNQPYKLELIEEIEGDRVTIYRQGEFVDLCRGPHLPSTGVVKHFKLLSVSGAYWRGSEKNPMLTRVYGTAFAKKEDLDNYLKFLEEAQRRDHRKLGPHLELFMLNTEYAPGMPFFLPKGVVVLNELMRFSRELHRERGYQEIFTPLIMNEQLWKISGHWDHYAENMYFIEKDEERYAVKPMNCPGHILVYKSRTVSYRDLPLRFFEFGRVHRYERSGVLHGLMRVRSFTQDDAHIFCTPDQIEEEILGVLDLINTIYGQFGFTYRVELSTMPEDHMGDEAIWEKATTALKNALERAGLSYKVNEGEGAFYGPKIDFHIRDSIGREWQCATIQLDFMMPEKFNVTYIGPDNKEHRAVMIHRAIYGSLERFFGILIEHFAGAFPTWLAPIQVAVIPISEKHNDGAEKIAKRISQEGFRVFFDNRRETLGYRIRQAQTQKIPYMIILGDKELESGKISVRTRTGKEIKDVDLEHFVETLRNEVLSRKLELLMEG.

Residues 1–59 (MKIKVKLPDGKEKEYDRGITPAEIAKELGVKKAIGAVVNGELWDLKRPIENDCELRLVT) enclose the TGS domain. The catalytic stretch occupies residues 240–531 (DHRKLGPHLE…LIEHFAGAFP (292 aa)). The Zn(2+) site is built by Cys332, His383, and His508.

Belongs to the class-II aminoacyl-tRNA synthetase family. As to quaternary structure, homodimer. The cofactor is Zn(2+).

Its subcellular location is the cytoplasm. It catalyses the reaction tRNA(Thr) + L-threonine + ATP = L-threonyl-tRNA(Thr) + AMP + diphosphate + H(+). Functionally, catalyzes the attachment of threonine to tRNA(Thr) in a two-step reaction: L-threonine is first activated by ATP to form Thr-AMP and then transferred to the acceptor end of tRNA(Thr). Also edits incorrectly charged L-seryl-tRNA(Thr). The chain is Threonine--tRNA ligase from Thermotoga petrophila (strain ATCC BAA-488 / DSM 13995 / JCM 10881 / RKU-1).